Reading from the N-terminus, the 1342-residue chain is MVYSYTEKKRIRKDFGKRPQVLDIPYLLSIQLDSFTKFIEQDPEGQYGLEAAFRSVFPIQSYNGNSKLEYVSYNLREPEFDVKECQIRGVTYSAPLRVKLRLVVYDKDAPANTVKDIKEQEVYMGEIPLMTDNGTFVINGTERVIVSQLHRSPGVFFDSDKGKTHSSGKVLYNARVIPYRGSWLDFEFDPKDNLFVRIDRRRKLPATIILRALNKTTEEILDLFFDKVVFEVKDQTLMMELLPERLRGETATFDIEANGKVYVEAGRRITARHIRQLTKDDITHIEVPVDYIVGKVASHDYVNEDTGEIIIAANQEFSLEDLANLSQAGYKKIEVLFTNDLDHGAYISDTLRADSTVDRLSALVEIYRMMRPGEPPTKEAAEALFESLFFSEERYDLSTVGRMKFNSSIGRDNDEGAGVLDETDIIEVMRKLIDIRNGIGEVDDIDHLGNRRIRSVGEMAENQFRVGLVRVERAVRERLSLGDLDAIMPQDLINAKPISAAVKEFFGSSQLSQFMDQNNPLSEVTHKRRISALGPGGLTRERAGFEVRDVHATHYGRLCPIETPEGPNIGLINSLSAFAQCNEYGFLETPYRRVVDGQVTDQVDYLSAIEEGTFVIAQANAVLTEEGTFADELIIARQKGESGLHPREHIQYMDVATNQVVSVAASLIPFLEHDDANRALMGANMQRQAVPTLKADKPLVGTGIERNVAVDSGVTAVAKRGGVVQSVDASRIVIKVNEEELVPGEAGIDIYNLTKYTRSNQNTCINQRPTVLPGEPVTRGDVLADGPSTDLGELALGQNMRIAFMPWNGYNFEDSILVSERVVQEDRFTTIHIQELSCVARDTKLGSEEITADIPNVGEAALSKLDESGIVYIGAEVKGGDILVGKVTPKGETQLTPEEKLLRAIFGEKASDVKDSSLRVPNSVSGTIIDVQVFTRDGVEKDKRALEIEQMQLKEAKKDITEEFQILEGGLLARVRTLLVAAGVSEVKLDAMDRKQWLEITLDDEAQQNQLEQLAEQYDELKAEFDKKFETKRRKITQGDDLAPGVLKIVKVYLAVKRRIQPGDKMAGRHGNKGVISKINPVEDMPYDEKGQPVDIVLNPLGVPSRMNIGQILEVHMGLAAKGVGDKINQMLKEQQELHKFRNFLQKVYDLGETRQEVDIAALSDDEVRTLIKNLRGGLPIATPIFDGAPEASIKELLKLVDLPESGQLKLFDGRTGDAFERPVTVGYMYMLKLNHLVDDKMHARSTGSYSLVTQQPLGGKAQFGGQRFGEMEVWALEAYGAAYTLQEMLTVKSDDVNGRTKMYKNIVDGDHRMEPGMPESFNVLLKEIRSLGINIELEDEE.

The protein belongs to the RNA polymerase beta chain family. In terms of assembly, the RNAP catalytic core consists of 2 alpha, 1 beta, 1 beta' and 1 omega subunit. When a sigma factor is associated with the core the holoenzyme is formed, which can initiate transcription.

The catalysed reaction is RNA(n) + a ribonucleoside 5'-triphosphate = RNA(n+1) + diphosphate. Its function is as follows. DNA-dependent RNA polymerase catalyzes the transcription of DNA into RNA using the four ribonucleoside triphosphates as substrates. The polypeptide is DNA-directed RNA polymerase subunit beta (Aliivibrio fischeri (strain MJ11) (Vibrio fischeri)).